The following is a 473-amino-acid chain: ATP synthase subunit beta (473 aa).

153-160 (GGAGVGKT) is an ATP binding site.

This sequence belongs to the ATPase alpha/beta chains family. In terms of assembly, F-type ATPases have 2 components, CF(1) - the catalytic core - and CF(0) - the membrane proton channel. CF(1) has five subunits: alpha(3), beta(3), gamma(1), delta(1), epsilon(1). CF(0) has three main subunits: a(1), b(2) and c(9-12). The alpha and beta chains form an alternating ring which encloses part of the gamma chain. CF(1) is attached to CF(0) by a central stalk formed by the gamma and epsilon chains, while a peripheral stalk is formed by the delta and b chains.

It localises to the cell inner membrane. The catalysed reaction is ATP + H2O + 4 H(+)(in) = ADP + phosphate + 5 H(+)(out). Produces ATP from ADP in the presence of a proton gradient across the membrane. The catalytic sites are hosted primarily by the beta subunits. This Rickettsia massiliae (strain Mtu5) protein is ATP synthase subunit beta.